Reading from the N-terminus, the 408-residue chain is Sex comb on midleg-like protein 4 (408 aa).

Phosphoserine is present on residues serine 55 and serine 65. The disordered stretch occupies residues 274–338 (AGGPATTTSG…TRRPSSRNPS (65 aa)). The span at 278–287 (ATTTSGSRTN) shows a compositional bias: polar residues. Over residues 288–306 (PVPSGGSSSPGLRLPASSP) the composition is skewed to low complexity. Residues 340–406 (WTVEDVVRFV…CYHIDKLKQA (67 aa)) enclose the SAM domain.

The protein belongs to the SCM family.

The protein localises to the nucleus. Its function is as follows. Putative Polycomb group (PcG) protein. PcG proteins act by forming multiprotein complexes, which are required to maintain the transcriptionally repressive state of homeotic genes throughout development. This is Sex comb on midleg-like protein 4 (Scml4) from Mus musculus (Mouse).